A 366-amino-acid chain; its full sequence is Eukaryotic translation initiation factor 3 subunit H (366 aa).

The 150-residue stretch at valine 12 to phenylalanine 161 folds into the MPN domain.

The protein belongs to the eIF-3 subunit H family. Component of the eukaryotic translation initiation factor 3 (eIF-3) complex.

It localises to the cytoplasm. Functionally, component of the eukaryotic translation initiation factor 3 (eIF-3) complex, which is involved in protein synthesis of a specialized repertoire of mRNAs and, together with other initiation factors, stimulates binding of mRNA and methionyl-tRNAi to the 40S ribosome. The eIF-3 complex specifically targets and initiates translation of a subset of mRNAs involved in cell proliferation. This Emericella nidulans (strain FGSC A4 / ATCC 38163 / CBS 112.46 / NRRL 194 / M139) (Aspergillus nidulans) protein is Eukaryotic translation initiation factor 3 subunit H.